Reading from the N-terminus, the 505-residue chain is ATP synthase subunit alpha (505 aa).

Residue 171 to 178 participates in ATP binding; the sequence is GDRQTGKT.

This sequence belongs to the ATPase alpha/beta chains family. As to quaternary structure, F-type ATPases have 2 components, CF(1) - the catalytic core - and CF(0) - the membrane proton channel. CF(1) has five subunits: alpha(3), beta(3), gamma(1), delta(1), epsilon(1). CF(0) has three main subunits: a(1), b(2) and c(9-12). The alpha and beta chains form an alternating ring which encloses part of the gamma chain. CF(1) is attached to CF(0) by a central stalk formed by the gamma and epsilon chains, while a peripheral stalk is formed by the delta and b chains.

It is found in the cell inner membrane. The catalysed reaction is ATP + H2O + 4 H(+)(in) = ADP + phosphate + 5 H(+)(out). Its function is as follows. Produces ATP from ADP in the presence of a proton gradient across the membrane. The alpha chain is a regulatory subunit. The chain is ATP synthase subunit alpha from Campylobacter curvus (strain 525.92).